A 417-amino-acid polypeptide reads, in one-letter code: Serine--tRNA ligase (417 aa).

232-234 (TAE) provides a ligand contact to L-serine. ATP-binding positions include 263-265 (RRE) and V279. E286 provides a ligand contact to L-serine. An ATP-binding site is contributed by 350–353 (EISS). Residue S385 coordinates L-serine.

The protein belongs to the class-II aminoacyl-tRNA synthetase family. Type-1 seryl-tRNA synthetase subfamily. In terms of assembly, homodimer. The tRNA molecule binds across the dimer.

Its subcellular location is the cytoplasm. The enzyme catalyses tRNA(Ser) + L-serine + ATP = L-seryl-tRNA(Ser) + AMP + diphosphate + H(+). The catalysed reaction is tRNA(Sec) + L-serine + ATP = L-seryl-tRNA(Sec) + AMP + diphosphate + H(+). Its pathway is aminoacyl-tRNA biosynthesis; selenocysteinyl-tRNA(Sec) biosynthesis; L-seryl-tRNA(Sec) from L-serine and tRNA(Sec): step 1/1. In terms of biological role, catalyzes the attachment of serine to tRNA(Ser). Is also able to aminoacylate tRNA(Sec) with serine, to form the misacylated tRNA L-seryl-tRNA(Sec), which will be further converted into selenocysteinyl-tRNA(Sec). The sequence is that of Serine--tRNA ligase from Leptospira borgpetersenii serovar Hardjo-bovis (strain JB197).